The chain runs to 485 residues: Mitochondria-eating protein (485 aa).

The stretch at 112–210 (TSHERELNEV…SILSSESSIL (99 aa)) forms a coiled coil. 2 stretches are compositionally biased toward low complexity: residues 214–241 (LSRS…SPTS) and 471–485 (RSRS…TPRF). Disordered regions lie at residues 214 to 244 (LSRS…SAKL) and 451 to 485 (RSRS…TPRF).

It belongs to the MIEAP family.

It localises to the cytoplasm. The protein localises to the mitochondrion outer membrane. The protein resides in the mitochondrion matrix. In terms of biological role, key regulator of mitochondrial quality that mediates the repairing or degradation of unhealthy mitochondria in response to mitochondrial damage. Mediator of mitochondrial protein catabolic process (also named MALM) by mediating the degradation of damaged proteins inside mitochondria by promoting the accumulation in the mitochondrial matrix of hydrolases that are characteristic of the lysosomal lumen. Also involved in mitochondrion degradation of damaged mitochondria by promoting the formation of vacuole-like structures (named MIV), which engulf and degrade unhealthy mitochondria by accumulating lysosomes. Binds cardiolipin. May form molecular condensates (non-membrane-bounded organelles) within mitochondria that compartmentalize and promote cardiolipin metabolism. This is Mitochondria-eating protein (spata18) from Xenopus laevis (African clawed frog).